A 176-amino-acid polypeptide reads, in one-letter code: NAD(P)H-quinone oxidoreductase subunit 6, chloroplastic (176 aa).

5 consecutive transmembrane segments (helical) span residues 10–30 (FLLV…VLLT), 32–52 (PIFS…FYIL), 61–81 (AQLL…VMFM), 95–115 (VGNG…ITII), and 152–172 (FFLP…GAIA).

Belongs to the complex I subunit 6 family. NDH is composed of at least 16 different subunits, 5 of which are encoded in the nucleus.

It localises to the plastid. The protein localises to the chloroplast thylakoid membrane. It carries out the reaction a plastoquinone + NADH + (n+1) H(+)(in) = a plastoquinol + NAD(+) + n H(+)(out). It catalyses the reaction a plastoquinone + NADPH + (n+1) H(+)(in) = a plastoquinol + NADP(+) + n H(+)(out). Functionally, NDH shuttles electrons from NAD(P)H:plastoquinone, via FMN and iron-sulfur (Fe-S) centers, to quinones in the photosynthetic chain and possibly in a chloroplast respiratory chain. The immediate electron acceptor for the enzyme in this species is believed to be plastoquinone. Couples the redox reaction to proton translocation, and thus conserves the redox energy in a proton gradient. This Populus alba (White poplar) protein is NAD(P)H-quinone oxidoreductase subunit 6, chloroplastic (ndhG).